The primary structure comprises 1736 residues: Hybrid signal transduction histidine kinase I (1736 aa).

Positions 143–161 are enriched in low complexity; it reads HNINNNQNNQNSVNINSSN. The disordered stretch occupies residues 143 to 171; that stretch reads HNINNNQNNQNSVNINSSNKGQYNRPEPS. A PAC domain is found at 234–286; it reads FEYPLRINRKNDNLVRYIQLKGEIIKKDDKVFKVLGVCHDFSEIQEAKDKLEE. The region spanning 287–358 is the PAS domain; it reads ESKFVEALIG…QINLEKSGTP (72 aa). Residues 378 to 469 are disordered; it reads TSNQQQSSLS…NTTNGIGGAT (92 aa). The segment covering 379–389 has biased composition (low complexity); the sequence is SNQQQSSLSKS. Over residues 392–412 the composition is skewed to polar residues; the sequence is PRSQSNCSNGNKSQNRLSKNY. Low complexity predominate over residues 413–469; that stretch reads STTTTTTNNNNNNNNNNNNNNNNNNNNNSISQQQQTQVSTQQTQQQQNTTNGIGGAT. One can recognise a Histidine kinase domain in the interval 556-908; it reads NISHELLSPM…TFHFILSIKS (353 aa). His559 carries the phosphohistidine; by autocatalysis modification. Disordered stretches follow at residues 711–821, 952–971, 1080–1124, 1157–1258, 1277–1301, 1330–1393, and 1419–1520; these read NSKT…KREK, TKKVKKDSNDNGNNDSTNYG, NGNN…KQHS, PPKS…ILSP, SLTPNSSNSTSTNVTQSSSNIINNG, ASSP…NLSS, and SNNL…PPIL. Composition is skewed to acidic residues over residues 725–735 and 758–789; these read SIDGDYDDQDN and ELDEKDNSDDDDENDDENDETDENDDDTDDDT. Low complexity-rich tracts occupy residues 790–807, 961–971, and 1080–1096; these read SSNTSRNNISNNLLFHNN, DNGNNDSTNYG, and NGNNNSGISLNNSNNNI. Polar residues predominate over residues 1097–1117; sequence QTPNGLNNSRGSSLISTPSTK. 2 stretches are compositionally biased toward low complexity: residues 1186–1195 and 1202–1258; these read SSPPINSSSS and TNGS…ILSP. The segment covering 1330 to 1339 has biased composition (polar residues); that stretch reads ASSPKQSQRG. Low complexity-rich tracts occupy residues 1340 to 1376, 1425 to 1475, 1482 to 1492, and 1506 to 1520; these read YSPKQQYSPKQYSPKQQYSPKQYSPKQQQQQQQQQQQ, NNNN…STPE, SPRSNNNNNCS, and SSTITTPQFQSPPIL. The Response regulatory domain maps to 1551-1674; it reads KVLVAEDNTM…LLYEVINTQI (124 aa). The residue at position 1605 (Asp1605) is a 4-aspartylphosphate. A compositionally biased stretch (low complexity) spans 1695–1722; it reads NNNNNNTNNNNNNNNSSNPVNNNNSNSI. A disordered region spans residues 1695–1736; sequence NNNNNNTNNNNNNNNSSNPVNNNNSNSIDATQQELNNEKIRI.

In terms of processing, activation probably requires transfer of a phosphate group between a histidine in the kinase core (transmitter) domain and an aspartate of the receiver domain.

It carries out the reaction ATP + protein L-histidine = ADP + protein N-phospho-L-histidine.. Its function is as follows. Acts as a receptor histidine kinase for a signal transduction pathway. This protein undergoes an ATP-dependent autophosphorylation at a conserved histidine residue in the kinase core, and a phosphoryl group is then transferred to a conserved aspartate residue in the receiver domain. In Dictyostelium discoideum (Social amoeba), this protein is Hybrid signal transduction histidine kinase I (dhkI-1).